A 389-amino-acid polypeptide reads, in one-letter code: LL-diaminopimelate aminotransferase (389 aa).

Y13 and G38 together coordinate substrate. Pyridoxal 5'-phosphate is bound by residues Y67, 101–102 (SK), Y126, N176, Y207, and 235–237 (SLS). Residues K102, Y126, and N176 each contribute to the substrate site. At K238 the chain carries N6-(pyridoxal phosphate)lysine. R246 lines the pyridoxal 5'-phosphate pocket. R364 is a substrate binding site.

This sequence belongs to the class-I pyridoxal-phosphate-dependent aminotransferase family. LL-diaminopimelate aminotransferase subfamily. Homodimer. Pyridoxal 5'-phosphate is required as a cofactor.

The enzyme catalyses (2S,6S)-2,6-diaminopimelate + 2-oxoglutarate = (S)-2,3,4,5-tetrahydrodipicolinate + L-glutamate + H2O + H(+). It functions in the pathway amino-acid biosynthesis; L-lysine biosynthesis via DAP pathway; LL-2,6-diaminopimelate from (S)-tetrahydrodipicolinate (aminotransferase route): step 1/1. Involved in the synthesis of meso-diaminopimelate (m-DAP or DL-DAP), required for both lysine and peptidoglycan biosynthesis. Catalyzes the direct conversion of tetrahydrodipicolinate to LL-diaminopimelate. The polypeptide is LL-diaminopimelate aminotransferase (Halothermothrix orenii (strain H 168 / OCM 544 / DSM 9562)).